The primary structure comprises 542 residues: Gamma-terpinene synthase 1 (542 aa).

Mn(2+)-binding residues include Asp-295 and Asp-299. Residues 295–299 carry the DDXXD motif motif; it reads DDVYD. 2 homodimerization regions span residues 301–307 and 373–410; these read YDTLDEL and EAKW…FTLP. Mn(2+) is bound by residues Asp-439 and Glu-447.

It belongs to the terpene synthase family. Homodimer. Mn(2+) serves as cofactor. Mg(2+) is required as a cofactor. As to expression, mostly expressed in flowers and, to a lower extent, in leaves, especially in glandular trichomes.

It carries out the reaction (2E)-geranyl diphosphate = gamma-terpinene + diphosphate. It catalyses the reaction (2E)-geranyl diphosphate = alpha-terpinene + diphosphate. It participates in secondary metabolite biosynthesis; terpenoid biosynthesis. Involved in the biosynthesis of phenolic monoterpenes natural products thymol and carvacrol which have a broad range of biological activities acting as antimicrobial compounds, insecticides, antioxidants and pharmaceutical agents. Monoterpene synthase which catalyzes the conversion of geranyl diphosphate (GPP) to gamma-terpinene and the minor products alpha-thujene, alpha-terpinene, myrcene, sabinene, (+)-R-limonene, alpha-pinene and alpha-phellandrene. This chain is Gamma-terpinene synthase 1, found in Thymus vulgaris (Thyme).